The sequence spans 61 residues: MGMRMMFTVFLLVVLATTVVSFTSDRASDDGNAAASDLIALTIKGCCSLPPCALSNPDYCG.

A signal peptide spans 1–21 (MGMRMMFTVFLLVVLATTVVS). Residues 22–44 (FTSDRASDDGNAAASDLIALTIK) constitute a propeptide that is removed on maturation. 2 disulfides stabilise this stretch: Cys-46-Cys-52 and Cys-47-Cys-60. The interval 48–50 (SLP) is ser-Xaa-Pro motif, crucial for potent interaction with nAChR. Tyr-59 carries the sulfotyrosine modification. Cys-60 carries the cysteine amide modification.

It belongs to the conotoxin A superfamily. In terms of tissue distribution, expressed by the venom duct.

It localises to the secreted. Its function is as follows. Alpha-conotoxins act on postsynaptic membranes, they bind to the nicotinic acetylcholine receptors (nAChR) and thus inhibit them. This toxin blocks mammalian nAChRs (alpha-7/CHRNA7 &gt; alpha-3-beta-2/CHRNA3-CHRNB2). The chain is Alpha-conotoxin PnIB from Conus pennaceus (Feathered cone).